We begin with the raw amino-acid sequence, 900 residues long: Protein translocase subunit SecA (900 aa).

Residues Q87, 105–109 (GEGKT), and D512 each bind ATP. A disordered region spans residues 849-900 (ERLAQQQQFSHQEEDSLNTGSPAQADRKIGRNDPCPCGSGKKYKQCHGRLQK). Positions 883, 885, 894, and 895 each coordinate Zn(2+). The segment covering 889–900 (KKYKQCHGRLQK) has biased composition (basic residues).

The protein belongs to the SecA family. Monomer and homodimer. Part of the essential Sec protein translocation apparatus which comprises SecA, SecYEG and auxiliary proteins SecDF-YajC and YidC. It depends on Zn(2+) as a cofactor.

The protein resides in the cell inner membrane. Its subcellular location is the cytoplasm. It carries out the reaction ATP + H2O + cellular proteinSide 1 = ADP + phosphate + cellular proteinSide 2.. Functionally, part of the Sec protein translocase complex. Interacts with the SecYEG preprotein conducting channel. Has a central role in coupling the hydrolysis of ATP to the transfer of proteins into and across the cell membrane, serving both as a receptor for the preprotein-SecB complex and as an ATP-driven molecular motor driving the stepwise translocation of polypeptide chains across the membrane. This chain is Protein translocase subunit SecA, found in Pectobacterium atrosepticum (strain SCRI 1043 / ATCC BAA-672) (Erwinia carotovora subsp. atroseptica).